Here is a 199-residue protein sequence, read N- to C-terminus: ATP-dependent Clp protease proteolytic subunit (199 aa).

The Nucleophile role is filled by Ser-102. Residue His-127 is part of the active site.

Belongs to the peptidase S14 family. Component of the chloroplastic Clp protease core complex.

It localises to the plastid. The protein localises to the chloroplast stroma. It carries out the reaction Hydrolysis of proteins to small peptides in the presence of ATP and magnesium. alpha-casein is the usual test substrate. In the absence of ATP, only oligopeptides shorter than five residues are hydrolyzed (such as succinyl-Leu-Tyr-|-NHMec, and Leu-Tyr-Leu-|-Tyr-Trp, in which cleavage of the -Tyr-|-Leu- and -Tyr-|-Trp bonds also occurs).. Its function is as follows. Cleaves peptides in various proteins in a process that requires ATP hydrolysis. Has a chymotrypsin-like activity. Plays a major role in the degradation of misfolded proteins. This Physcomitrium patens (Spreading-leaved earth moss) protein is ATP-dependent Clp protease proteolytic subunit.